A 364-amino-acid chain; its full sequence is MIIKNMDASTNVPYLWLPIFLYDEPILASQVIASIELILYSICLYIVVVSLKIFVQVRMFHLNFIILVAPFFGIWFELIIGKLITMCYQLSIFSIGNLEIRKFYVLWTDDSNKMLVVNSFEGLELLIIAGFMEYHYMFSVVFGAVAVAIERLAASVLIDNYESTNKIFIPIALTVFFQIIAITCSCLALFHKFTIITINGTWIVSCACSSIVFFLVERINLRWKAEMEHPRREKVYTISQRFQVKENIRALDLGKRLIFSELGTISIIGLIIATLLLELVPPSLVHIAENALFLNPFGICTVAMYSIPAWKKRYKNAFPSIFCFLMRLKNRKIDVQSMEPLEEFSKRIYEETNIHFAQLNESWT.

A run of 7 helical transmembrane segments spans residues 31-51, 64-84, 125-145, 167-187, 195-215, 257-277, and 290-310; these read VIASIELILYSICLYIVVVSL, FIILVAPFFGIWFELIIGKLI, LLIIAGFMEYHYMFSVVFGAV, IFIPIALTVFFQIIAITCSCL, IITINGTWIVSCACSSIVFFL, LIFSELGTISIIGLIIATLLL, and NALFLNPFGICTVAMYSIPAW.

Belongs to the nematode receptor-like protein sre family.

It is found in the membrane. The polypeptide is Serpentine receptor class epsilon-27 (sre-27) (Caenorhabditis elegans).